The sequence spans 320 residues: Ribosomal RNA small subunit methyltransferase H (320 aa).

S-adenosyl-L-methionine contacts are provided by residues 42–44 (GGH), D62, F86, D108, and Q115.

The protein belongs to the methyltransferase superfamily. RsmH family.

It is found in the cytoplasm. It catalyses the reaction cytidine(1402) in 16S rRNA + S-adenosyl-L-methionine = N(4)-methylcytidine(1402) in 16S rRNA + S-adenosyl-L-homocysteine + H(+). Functionally, specifically methylates the N4 position of cytidine in position 1402 (C1402) of 16S rRNA. This Yersinia pseudotuberculosis serotype O:1b (strain IP 31758) protein is Ribosomal RNA small subunit methyltransferase H.